A 230-amino-acid chain; its full sequence is UPF0173 metal-dependent hydrolase Rsph17029_0942 (230 aa).

This sequence belongs to the UPF0173 family.

This chain is UPF0173 metal-dependent hydrolase Rsph17029_0942, found in Cereibacter sphaeroides (strain ATCC 17029 / ATH 2.4.9) (Rhodobacter sphaeroides).